The following is a 429-amino-acid chain: 3-phosphoshikimate 1-carboxyvinyltransferase (429 aa).

Residues K22, S23, and R27 each contribute to the 3-phosphoshikimate site. K22 provides a ligand contact to phosphoenolpyruvate. The phosphoenolpyruvate site is built by G94 and R122. Residues S167, Q169, D315, and K342 each contribute to the 3-phosphoshikimate site. Q169 serves as a coordination point for phosphoenolpyruvate. The Proton acceptor role is filled by D315. Phosphoenolpyruvate is bound by residues R346 and R388.

The protein belongs to the EPSP synthase family. Monomer.

The protein resides in the cytoplasm. It carries out the reaction 3-phosphoshikimate + phosphoenolpyruvate = 5-O-(1-carboxyvinyl)-3-phosphoshikimate + phosphate. It participates in metabolic intermediate biosynthesis; chorismate biosynthesis; chorismate from D-erythrose 4-phosphate and phosphoenolpyruvate: step 6/7. Catalyzes the transfer of the enolpyruvyl moiety of phosphoenolpyruvate (PEP) to the 5-hydroxyl of shikimate-3-phosphate (S3P) to produce enolpyruvyl shikimate-3-phosphate and inorganic phosphate. The chain is 3-phosphoshikimate 1-carboxyvinyltransferase from Geotalea daltonii (strain DSM 22248 / JCM 15807 / FRC-32) (Geobacter daltonii).